Consider the following 872-residue polypeptide: Alanine--tRNA ligase (872 aa).

The Zn(2+) site is built by H567, H571, C669, and H673.

This sequence belongs to the class-II aminoacyl-tRNA synthetase family. It depends on Zn(2+) as a cofactor.

The protein resides in the cytoplasm. The catalysed reaction is tRNA(Ala) + L-alanine + ATP = L-alanyl-tRNA(Ala) + AMP + diphosphate. Functionally, catalyzes the attachment of alanine to tRNA(Ala) in a two-step reaction: alanine is first activated by ATP to form Ala-AMP and then transferred to the acceptor end of tRNA(Ala). Also edits incorrectly charged Ser-tRNA(Ala) and Gly-tRNA(Ala) via its editing domain. This Streptococcus pyogenes serotype M12 (strain MGAS2096) protein is Alanine--tRNA ligase.